The primary structure comprises 487 residues: Malonate-semialdehyde dehydrogenase (487 aa).

The NAD(+) site is built by alanine 150, phenylalanine 152, lysine 176, glutamate 179, arginine 180, serine 229, and threonine 251. Catalysis depends on cysteine 284, which acts as the Nucleophile. Residue glutamate 382 participates in NAD(+) binding.

Belongs to the aldehyde dehydrogenase family. IolA subfamily. Homotetramer.

The catalysed reaction is 3-oxopropanoate + NAD(+) + CoA + H2O = hydrogencarbonate + acetyl-CoA + NADH + H(+). It catalyses the reaction 2-methyl-3-oxopropanoate + NAD(+) + CoA + H2O = propanoyl-CoA + hydrogencarbonate + NADH + H(+). It participates in polyol metabolism; myo-inositol degradation into acetyl-CoA; acetyl-CoA from myo-inositol: step 7/7. Its function is as follows. Catalyzes the oxidation of malonate semialdehyde (MSA) and methylmalonate semialdehyde (MMSA) into acetyl-CoA and propanoyl-CoA, respectively. Is involved in a myo-inositol catabolic pathway. Bicarbonate, and not CO2, is the end-product of the enzymatic reaction. This chain is Malonate-semialdehyde dehydrogenase, found in Bacillus subtilis subsp. natto.